The chain runs to 109 residues: Ig kappa chain V region S211 (109 aa).

Residues 1–23 form a framework-1 region; sequence DVQMTQSPSYLAASPGESVSISC. Positions 24-35 are complementarity-determining-1; it reads KASNKSISNNLA. The framework-2 stretch occupies residues 36 to 50; sequence WYZZKPGKANKLLIS. Positions 51 to 57 are complementarity-determining-2; the sequence is SGSTLQS. The segment at 58–89 is framework-3; sequence GTPSRFSGSGSDTDFTLTIRSLEFQDFAVYYC. The tract at residues 90–98 is complementarity-determining-3; it reads ZZYNEPYYT. Residues 99 to 108 are framework-4; the sequence is FGAGTMLELK.

The chain is Ig kappa chain V region S211 from Rattus norvegicus (Rat).